A 472-amino-acid chain; its full sequence is Poly(A) polymerase catalytic subunit (472 aa).

Residues aspartate 194 and aspartate 196 contribute to the active site.

The protein belongs to the poxviridae poly(A) polymerase catalytic subunit family. In terms of assembly, heterodimer of a large (catalytic) subunit and a small (regulatory) subunit.

It catalyses the reaction RNA(n) + ATP = RNA(n)-3'-adenine ribonucleotide + diphosphate. In terms of biological role, polymerase that creates the 3'-poly(A) tail of mRNA's. The sequence is that of Poly(A) polymerase catalytic subunit (PAPL) from Fowlpox virus (strain NVSL) (FPV).